The sequence spans 256 residues: DNA repair protein RecO (256 aa).

The protein belongs to the RecO family.

In terms of biological role, involved in DNA repair and RecF pathway recombination. This Desulforamulus reducens (strain ATCC BAA-1160 / DSM 100696 / MI-1) (Desulfotomaculum reducens) protein is DNA repair protein RecO.